A 316-amino-acid polypeptide reads, in one-letter code: Pantothenate kinase (316 aa).

Position 95 to 102 (Gly95 to Ser102) interacts with ATP.

It belongs to the prokaryotic pantothenate kinase family.

It is found in the cytoplasm. It catalyses the reaction (R)-pantothenate + ATP = (R)-4'-phosphopantothenate + ADP + H(+). Its pathway is cofactor biosynthesis; coenzyme A biosynthesis; CoA from (R)-pantothenate: step 1/5. In Shewanella sp. (strain MR-4), this protein is Pantothenate kinase.